Consider the following 319-residue polypeptide: MCSLPGSRKPLLRVAVTGGTHGNEMCGVYLARYWLQNPGELQRPSFSAMPVLANPAATAACRRYIDRDLNRTFTLTFLGSTATPDDPYEVKRAQELNQLLGPKGTCQAFDFILDLHNTTANTGACLISEVSQNPFNLHLCHYLQLQNPGLPCRLFQFEPPGTESYSMDSVSKNGISLELGPQPQGVLRAELFSQMRAMVASILDFIELFNQGMEFPAFEMEVYKNLGSVDFPRTTDGHLTGTVHSRLQDHDFEPLRPGEPIFKLFSGEDVLYEGDSVVYPLFVNEAAYYEKRVAFLKSEKIRISVPALPGLTPSSTQTP.

Positions 1–210 (MCSLPGSRKP…SILDFIELFN (210 aa)) are hydrolytic domain. 2 residues coordinate Zn(2+): His-21 and Glu-24. Substrate-binding positions include Arg-63 and 70–71 (NR). His-116 is a Zn(2+) binding site. Residues Glu-178 and Tyr-288 each contribute to the substrate site. A shielding domain region spans residues 211–318 (QGMEFPAFEM…PGLTPSSTQT (108 aa)). Thr-318 bears the Phosphothreonine mark.

It belongs to the AspA/AstE family. Aspartoacylase subfamily. As to quaternary structure, exists as a mixture of homodimers and homotetramer, both catalytically active. It depends on Zn(2+) as a cofactor.

It localises to the apical cell membrane. It is found in the cytoplasm. It catalyses the reaction an N-acyl-aromatic L-alpha-amino acid + H2O = an aromatic L-alpha-amino acid + a carboxylate. The enzyme catalyses an N-acetyl-L-cysteine-S-conjugate + H2O = an S-substituted L-cysteine + acetate. In terms of biological role, plays an important role in deacetylating mercapturic acids in kidney proximal tubules. Also acts on N-acetyl-aromatic amino acids. The polypeptide is N-acyl-aromatic-L-amino acid amidohydrolase (carboxylate-forming) (Acy3) (Rattus norvegicus (Rat)).